Consider the following 353-residue polypeptide: O-antigen biosynthesis glycosyltransferase WclY (353 aa).

Residues 116–136 (SLIGGLLWCSIWLFFDKLVIL) traverse the membrane as a helical segment. Residues Asn190 and Glu271 each contribute to the UDP site. Residues 263 to 271 (EGFGLTVLE) carry the E(x7)E motif.

Belongs to the glycosyltransferase group 1 family. Glycosyltransferase 4 subfamily.

The protein localises to the membrane. The protein operates within bacterial outer membrane biogenesis; LPS O-antigen biosynthesis. Its activity is regulated as follows. Activated by 5mM MnCl(2) and MgCl(2). No significant effect on activity by 5 mM ethylenediaminetetraacetic acid (EDTA), 0.125-0.5% Triton X-100 or dithiothreitol (DTT). Inhibited by 5 mM Zn-acetate. Its function is as follows. Involved in the assembly of the O-repeating unit during O-antigen biosynthesis. Glucosyltransferase accountable for the alpha-D-Glc-1,4-beta-D-Gal linkage within the O-antigen. Transfers alpha-1,4-Glc to the Gal moiety of a specific Gal-beta1-3GalNAc-alpha-OPO3-PO3-phenoxyundecyl (Gal-beta1-3GalNAc-PP-PhU) synthetic natural acceptor substrate analog. Requires both Gal-beta1-3GalNAc-alpha and the diphosphate moiety in the acceptor. Not active with GalNAc-PP-PhU, GlcNAc-PP-PhU, Gal-beta1-3GalNAc-alpha-O-benzyl, D-Rha-alpha1-3GlcNAc-alpha-PP-PhU or D-Man-alpha1-3Man-alpha-5-benzamidopentyl (BAP), nor with glycopeptides TTTVTP (Gal-beta1-3GalNAc-alpha-)TPTG or TT (Gal-beta1-3GalNAc-alpha-)TVTPTPTG as acceptor substrates. Has a broad nucleotide sugar donor substrate specificity with ADP-Glc, TDP-Glc and UDP-Glc as superior donors. Gal, GlcNAc, and GalNAc residues are transferred from UDP-sugars, but with low activity. UDP-Xyl, UDP-GlcA, GDP-Fuc or GDP-K-Rha do not act as donors. The protein is O-antigen biosynthesis glycosyltransferase WclY of Escherichia coli.